Consider the following 341-residue polypeptide: Aspartate--ammonia ligase (341 aa).

Belongs to the class-II aminoacyl-tRNA synthetase family. AsnA subfamily.

It is found in the cytoplasm. It catalyses the reaction L-aspartate + NH4(+) + ATP = L-asparagine + AMP + diphosphate + H(+). It functions in the pathway amino-acid biosynthesis; L-asparagine biosynthesis; L-asparagine from L-aspartate (ammonia route): step 1/1. The chain is Aspartate--ammonia ligase from Clostridium tetani (strain Massachusetts / E88).